Reading from the N-terminus, the 444-residue chain is Putative zinc metalloprotease PD_0327 (444 aa).

Zn(2+) is bound at residue His-22. Glu-23 is a catalytic residue. Residue His-26 participates in Zn(2+) binding. A helical membrane pass occupies residues 98–120 (IAIVAAGPLANLLLCMLLLWVLF). The region spanning 192–278 (TLELSKLKQP…HPGMIEIRRG (87 aa)) is the PDZ domain. Helical transmembrane passes span 371–393 (VGWF…LFPI) and 418–440 (AMAA…AFYN).

It belongs to the peptidase M50B family. It depends on Zn(2+) as a cofactor.

Its subcellular location is the cell inner membrane. This Xylella fastidiosa (strain Temecula1 / ATCC 700964) protein is Putative zinc metalloprotease PD_0327.